A 132-amino-acid polypeptide reads, in one-letter code: U-scoloptoxin(11)-Sa1a (132 aa).

The first 19 residues, 1–19 (MIRFFAFVLFFATQELILC), serve as a signal peptide directing secretion.

Belongs to the scoloptoxin-11 family. Contains 5 disulfide bonds. As to expression, expressed by the venom gland.

It is found in the secreted. The protein is U-scoloptoxin(11)-Sa1a of Scolopendra alternans (Florida Keys giant centipede).